The chain runs to 63 residues: Small ribosomal subunit protein bS21 (63 aa).

This sequence belongs to the bacterial ribosomal protein bS21 family.

This chain is Small ribosomal subunit protein bS21, found in Porphyromonas gingivalis (strain ATCC 33277 / DSM 20709 / CIP 103683 / JCM 12257 / NCTC 11834 / 2561).